The sequence spans 59 residues: Ferredoxin (59 aa).

4Fe-4S ferredoxin-type domains lie at 2–30 (GKIT…LEVN) and 31–59 (DHVE…LKVE). Residues Cys-12, Cys-15, Cys-18, Cys-22, Cys-41, Cys-44, Cys-47, and Cys-51 each coordinate [4Fe-4S] cluster.

It depends on [4Fe-4S] cluster as a cofactor.

Ferredoxins are iron-sulfur proteins that transfer electrons in a wide variety of metabolic reactions. This is Ferredoxin from Entamoeba histolytica (strain ATCC 30459 / HM-1:IMSS / ABRM).